A 440-amino-acid polypeptide reads, in one-letter code: Chromosomal replication initiator protein DnaA (440 aa).

The segment at 1–93 (MNVQLNEIWN…QTPVKPVAQE (93 aa)) is domain I, interacts with DnaA modulators. Positions 94–101 (YTEDSNMS) are domain II. Residues 102-318 (FLNPKYTFDT…GALNRVIAYS (217 aa)) are domain III, AAA+ region. The ATP site is built by Gly-146, Gly-148, Lys-149, and Thr-150. The domain IV, binds dsDNA stretch occupies residues 319 to 440 (TLTENIINVD…EEIKKNITGG (122 aa)).

Belongs to the DnaA family. As to quaternary structure, oligomerizes as a right-handed, spiral filament on DNA at oriC.

It localises to the cytoplasm. Its function is as follows. Plays an essential role in the initiation and regulation of chromosomal replication. ATP-DnaA binds to the origin of replication (oriC) to initiate formation of the DNA replication initiation complex once per cell cycle. Binds the DnaA box (a 9 base pair repeat at the origin) and separates the double-stranded (ds)DNA. Forms a right-handed helical filament on oriC DNA; dsDNA binds to the exterior of the filament while single-stranded (ss)DNA is stabiized in the filament's interior. The ATP-DnaA-oriC complex binds and stabilizes one strand of the AT-rich DNA unwinding element (DUE), permitting loading of DNA polymerase. After initiation quickly degrades to an ADP-DnaA complex that is not apt for DNA replication. Binds acidic phospholipids. This Ruminiclostridium cellulolyticum (strain ATCC 35319 / DSM 5812 / JCM 6584 / H10) (Clostridium cellulolyticum) protein is Chromosomal replication initiator protein DnaA.